Here is a 325-residue protein sequence, read N- to C-terminus: ATP synthase gamma chain (325 aa).

This sequence belongs to the ATPase gamma chain family. As to quaternary structure, F-type ATPases have 2 components, CF(1) - the catalytic core - and CF(0) - the membrane proton channel. CF(1) has five subunits: alpha(3), beta(3), gamma(1), delta(1), epsilon(1). CF(0) has three main subunits: a, b and c.

Its subcellular location is the cell membrane. Functionally, produces ATP from ADP in the presence of a proton gradient across the membrane. The gamma chain is believed to be important in regulating ATPase activity and the flow of protons through the CF(0) complex. The protein is ATP synthase gamma chain of Corynebacterium urealyticum (strain ATCC 43042 / DSM 7109).